We begin with the raw amino-acid sequence, 228 residues long: DNA mismatch repair protein MutH (228 aa).

This sequence belongs to the MutH family.

It is found in the cytoplasm. Functionally, sequence-specific endonuclease that cleaves unmethylated GATC sequences. It is involved in DNA mismatch repair. The sequence is that of DNA mismatch repair protein MutH from Serratia proteamaculans (strain 568).